Here is a 499-residue protein sequence, read N- to C-terminus: uncharacterized protein (499 aa).

FAD-binding positions include 6–35 (EAVIIGGGPVGFMLASELAIAGVGTCVIER) and 272–282 (YRDGRIFLAGD).

It belongs to the PheA/TfdB FAD monooxygenase family. Requires FAD as cofactor.

This is an uncharacterized protein from Bacillus subtilis (strain 168).